The following is a 670-amino-acid chain: Probable metal-nicotianamine transporter YSL4 (670 aa).

Helical transmembrane passes span 35-55 (ITIR…IITH), 59-79 (LTIG…FFFI), 107-127 (CVVS…LIAM), 151-171 (GLWW…FCLV), 273-293 (LVNC…WPFI), 318-338 (VFIA…KIIV), 389-409 (FAVS…PLIF), 416-436 (FVLC…YGAG), 450-470 (GLFI…GLAA), 507-527 (LGTA…WTAF), 559-579 (PKHC…VNLI), 601-621 (FYIG…MLVW), and 636-656 (VASG…ILSI).

Belongs to the YSL (TC 2.A.67.2) family.

It is found in the membrane. May be involved in the transport of nicotianamine-chelated metals. This chain is Probable metal-nicotianamine transporter YSL4 (YSL4), found in Arabidopsis thaliana (Mouse-ear cress).